The primary structure comprises 1013 residues: Zinc finger and BTB domain-containing protein 4 (1013 aa).

One can recognise a BTB domain in the interval 30–152 (CDVTLIAGDT…IYSARLALPG (123 aa)). A Glycyl lysine isopeptide (Lys-Gly) (interchain with G-Cter in SUMO2) cross-link involves residue K40. Residues 67 to 110 (LPPATGGAAPNPATTTAASSSSSSSSSSSSSSSSASSSSSSSSS) show a composition bias toward low complexity. Disordered stretches follow at residues 67-124 (LPPA…SPPR) and 183-221 (DAWV…AEAQ). The segment covering 111–121 (SPPPASPPASS) has biased composition (pro residues). The interval 186 to 348 (VPPTPAPMAT…CRYCEKVFAL (163 aa)) is interaction with CBFA2T3. The C2H2-type 1; atypical zinc finger occupies 234-256 (LPCPQCGKSFIHPKRLQTHEAQC). Positions 257-281 (RRGASTRGSTGLGAGGAGPGGPAGV) are disordered. Over residues 266–279 (TGLGAGGAGPGGPA) the composition is skewed to gly residues. 3 C2H2-type zinc fingers span residues 309 to 331 (YVCA…SNVH), 337 to 359 (YPCR…EVWH), and 365 to 388 (YQCI…RAFH). S391 carries the phosphoserine modification. Disordered regions lie at residues 428–765 (KTYS…STRF), 783–852 (HGQR…DPII), 883–904 (GREP…AGEG), and 972–1013 (VNPQ…GDVG). A compositionally biased stretch (pro residues) spans 453 to 470 (ASPPPGPPPAPEPGPPPS). Composition is skewed to low complexity over residues 496–506 (TASTGGSQAAS) and 531–554 (ATPT…ATTT). K573 participates in a covalent cross-link: Glycyl lysine isopeptide (Lys-Gly) (interchain with G-Cter in SUMO2). Gly residues predominate over residues 576 to 590 (GGIGGGGGPPTGAGR). Over residues 608-625 (IGEEAIVKRRISETDLRP) the composition is skewed to basic and acidic residues. Residue K615 forms a Glycyl lysine isopeptide (Lys-Gly) (interchain with G-Cter in SUMO2) linkage. Residues 627–663 (ELSGEEMEESEEDEEEEDEEEEEEDEEESKAGGEDQL) are a coiled coil. Residues 629 to 654 (SGEEMEESEEDEEEEDEEEEEEDEEE) are compositionally biased toward acidic residues. Positions 678 to 689 (AAGGASVGGSGL) are enriched in gly residues. 2 C2H2-type zinc fingers span residues 726 to 748 (HRCG…QEAH) and 765 to 787 (FTCP…GQRH). Residues T795 and T797 each carry the phosphothreonine; by HIPK2 modification. Residues 836 to 846 (TAAEEASETAS) are compositionally biased toward low complexity. Residues 883 to 902 (GREPGGGRGKSGSEGPVGAG) show a composition bias toward gly residues. A compositionally biased stretch (pro residues) spans 976–995 (AAPPAPPTPPPPTLPPPIPP). T983 is modified (phosphothreonine; by HIPK2). Basic and acidic residues predominate over residues 997–1013 (GEGERAGVERTQKGDVG).

As to quaternary structure, interacts with HIPK2. Interacts with CBFA2T3. Interacts with ZBTB38. Post-translationally, phosphorylated by HIPK2. This phosphorylation reduces stability and triggers ZBTB4 protein degradation in response to DNA damage.

It is found in the nucleus. Its subcellular location is the chromosome. Functionally, transcriptional repressor with bimodal DNA-binding specificity. Represses transcription in a methyl-CpG-dependent manner. Binds with a higher affinity to methylated CpG dinucleotides in the consensus sequence 5'-CGCG-3' but can also bind to the non-methylated consensus sequence 5'-CTGCNA-3' also known as the consensus kaiso binding site (KBS). Can also bind specifically to a single methyl-CpG pair and can bind hemimethylated DNA but with a lower affinity compared to methylated DNA. Plays a role in postnatal myogenesis, may be involved in the regulation of satellite cells self-renewal. This is Zinc finger and BTB domain-containing protein 4 (ZBTB4) from Homo sapiens (Human).